A 463-amino-acid chain; its full sequence is Cysteine--tRNA ligase (463 aa).

Cysteine 33 contacts Zn(2+). The 'HIGH' region motif lies at 35–45; sequence PTVYDFAHIGN. Residues cysteine 221, histidine 246, and glutamate 250 each coordinate Zn(2+). The 'KMSKS' region signature appears at 279 to 283; it reads KMSKS. Residue lysine 282 participates in ATP binding.

The protein belongs to the class-I aminoacyl-tRNA synthetase family. Monomer. It depends on Zn(2+) as a cofactor.

It localises to the cytoplasm. The enzyme catalyses tRNA(Cys) + L-cysteine + ATP = L-cysteinyl-tRNA(Cys) + AMP + diphosphate. This Rhizobium johnstonii (strain DSM 114642 / LMG 32736 / 3841) (Rhizobium leguminosarum bv. viciae) protein is Cysteine--tRNA ligase.